The chain runs to 91 residues: Potassium channel toxin BmTXK-beta-2 (91 aa).

Residues 1–19 (MQRNLVVLLFLGMVALSSC) form the signal peptide. The propeptide occupies 20-27 (GLREKHFQ). Positions 54 to 91 (QFGCPAYQGYCDDHCQDIKKEEGFCHGFKCKCGIPMGF) constitute a BetaSPN-type CS-alpha/beta domain. Intrachain disulfides connect C57-C78, C64-C83, and C68-C85.

The protein belongs to the long chain scorpion toxin family. Class 1 subfamily. Expressed by the venom gland.

It is found in the secreted. Inhibits voltage-gated potassium channel. This Olivierus martensii (Manchurian scorpion) protein is Potassium channel toxin BmTXK-beta-2.